The following is a 261-amino-acid chain: Pantothenate synthetase (261 aa).

Residue 29 to 36 (MGALHNGH) participates in ATP binding. His36 (proton donor) is an active-site residue. Residue Gln60 coordinates (R)-pantoate. Gln60 is a beta-alanine binding site. Position 147–150 (147–150 (GEKD)) interacts with ATP. Gln153 serves as a coordination point for (R)-pantoate. An ATP-binding site is contributed by 184–187 (LSSR).

It belongs to the pantothenate synthetase family. As to quaternary structure, homodimer.

Its subcellular location is the cytoplasm. It catalyses the reaction (R)-pantoate + beta-alanine + ATP = (R)-pantothenate + AMP + diphosphate + H(+). The protein operates within cofactor biosynthesis; (R)-pantothenate biosynthesis; (R)-pantothenate from (R)-pantoate and beta-alanine: step 1/1. In terms of biological role, catalyzes the condensation of pantoate with beta-alanine in an ATP-dependent reaction via a pantoyl-adenylate intermediate. The sequence is that of Pantothenate synthetase from Francisella tularensis subsp. holarctica (strain FTNF002-00 / FTA).